A 482-amino-acid chain; its full sequence is Glutamate--tRNA ligase 2 (482 aa).

The 'HIGH' region motif lies at 16–26 (PSPTGYLHLGN). Zn(2+)-binding residues include cysteine 113, cysteine 115, cysteine 140, and histidine 142. The short motif at 257 to 261 (PLSKR) is the 'KMSKS' region element. Lysine 260 contributes to the ATP binding site.

The protein belongs to the class-I aminoacyl-tRNA synthetase family. Glutamate--tRNA ligase type 1 subfamily. As to quaternary structure, monomer. Requires Zn(2+) as cofactor.

The protein resides in the cytoplasm. It carries out the reaction tRNA(Glu) + L-glutamate + ATP = L-glutamyl-tRNA(Glu) + AMP + diphosphate. Functionally, catalyzes the attachment of glutamate to tRNA(Glu) in a two-step reaction: glutamate is first activated by ATP to form Glu-AMP and then transferred to the acceptor end of tRNA(Glu). The sequence is that of Glutamate--tRNA ligase 2 from Acidithiobacillus ferrooxidans (strain ATCC 53993 / BNL-5-31) (Leptospirillum ferrooxidans (ATCC 53993)).